The chain runs to 416 residues: Probable endo-beta-1,4-glucanase celB (416 aa).

Residues 1–17 (MIWTLAPFVALLPLVTA) form the signal peptide. N-linked (GlcNAc...) asparagine glycans are attached at residues N45, N104, N117, and N135. Residue E214 is the Nucleophile of the active site. Residue E219 is the Proton donor of the active site. N-linked (GlcNAc...) asparagine glycans are attached at residues N233, N278, N292, and N382.

The protein belongs to the glycosyl hydrolase 7 (cellulase C) family.

It is found in the secreted. The enzyme catalyses Endohydrolysis of (1-&gt;4)-beta-D-glucosidic linkages in cellulose, lichenin and cereal beta-D-glucans.. Its function is as follows. Has endoglucanase activity on substrates containing beta-1,4 glycosidic bonds, like in carboxymethylcellulose (CMC), hydroxyethylcellulose (HEC) and beta-glucan. Involved in the degradation of complex natural cellulosic substrates. The protein is Probable endo-beta-1,4-glucanase celB (celB) of Aspergillus flavus (strain ATCC 200026 / FGSC A1120 / IAM 13836 / NRRL 3357 / JCM 12722 / SRRC 167).